Consider the following 336-residue polypeptide: Small ribosomal subunit protein uS9m (336 aa).

The interval 32–81 is disordered; the sequence is STTTTTTTTTTTTTSDEIPTTKPRFQSRFRRNQQPHQQQRSPYTSSQVTE. A compositionally biased stretch (low complexity) spans 33–45; it reads TTTTTTTTTTTTT. A compositionally biased stretch (polar residues) spans 65 to 81; the sequence is QPHQQQRSPYTSSQVTE.

The protein belongs to the universal ribosomal protein uS9 family. In terms of assembly, component of the mitochondrial small ribosomal subunit (mt-SSU).

Its subcellular location is the mitochondrion. In terms of biological role, component of the mitochondrial ribosome (mitoribosome), a dedicated translation machinery responsible for the synthesis of mitochondrial genome-encoded proteins, including at least some of the essential transmembrane subunits of the mitochondrial respiratory chain. The mitoribosomes are attached to the mitochondrial inner membrane and translation products are cotranslationally integrated into the membrane. The protein is Small ribosomal subunit protein uS9m (MRPS9) of Candida albicans (strain SC5314 / ATCC MYA-2876) (Yeast).